The following is a 724-amino-acid chain: Methionine--tRNA ligase (724 aa).

Positions 11–21 (PYANGPIHAGH) match the 'HIGH' region motif. Residues cysteine 143, cysteine 146, cysteine 156, and cysteine 159 each contribute to the Zn(2+) site. The 'KMSKS' region motif lies at 344 to 348 (KFSTS). Threonine 347 serves as a coordination point for ATP. Residues 624-724 (EFSKIDLRIG…KEVKLGAKVR (101 aa)) form the tRNA-binding domain.

The protein belongs to the class-I aminoacyl-tRNA synthetase family. MetG type 1 subfamily. Homodimer. The cofactor is Zn(2+).

It is found in the cytoplasm. It carries out the reaction tRNA(Met) + L-methionine + ATP = L-methionyl-tRNA(Met) + AMP + diphosphate. Is required not only for elongation of protein synthesis but also for the initiation of all mRNA translation through initiator tRNA(fMet) aminoacylation. In Pyrococcus furiosus (strain ATCC 43587 / DSM 3638 / JCM 8422 / Vc1), this protein is Methionine--tRNA ligase.